The sequence spans 1704 residues: Vitellogenin-1 (1704 aa).

The signal sequence occupies residues 1–14; sequence MKAVVLALTLAFVA. The Vitellogenin domain occupies 22 to 660; that stretch reads FAAGKTYVYK…DAATFMPKSF (639 aa). N-linked (GlcNAc...) asparagine glycans are attached at residues asparagine 446, asparagine 635, asparagine 903, asparagine 908, asparagine 1019, asparagine 1054, asparagine 1080, asparagine 1121, asparagine 1174, asparagine 1285, asparagine 1322, asparagine 1375, asparagine 1379, asparagine 1405, asparagine 1456, and asparagine 1512. The span at 1078-1109 shows a compositional bias: low complexity; sequence RRNSSSSSSSSSSSSSESRSSRSSSSSSSSSR. Positions 1078 to 1213 are disordered; the sequence is RRNSSSSSSS…SSDRRSKEVM (136 aa). The span at 1122–1204 shows a compositional bias: low complexity; it reads SSSSSSSRRS…FSDSSSSSSS (83 aa). A VWFD domain is found at 1442-1617; the sequence is AECSFVEDTL…SWILPAESCR (176 aa). Disulfide bonds link cysteine 1444-cysteine 1580 and cysteine 1467-cysteine 1616.

Phosvitin, an egg yolk storage protein, is one of the most highly phosphorylated (10%) proteins in nature. Post-translationally, the N-terminal of the blood vitellogenin is blocked. In terms of tissue distribution, produced by the liver, secreted into the blood and then sequestered by receptor mediated endocytosis into growing oocytes, where it is generally cleaved, giving rise to the respective yolk components composed of complex suite of small cleavage products.

In terms of biological role, precursor of the major egg-yolk proteins that are sources of nutrients during early development of oviparous organisms. The sequence is that of Vitellogenin-1 (vtg1) from Fundulus heteroclitus (Killifish).